Here is a 180-residue protein sequence, read N- to C-terminus: Oligoribonuclease (180 aa).

The region spanning 7-170 (LIWIDLEMTG…DDIRESLAEL (164 aa)) is the Exonuclease domain. Y128 is a catalytic residue.

Belongs to the oligoribonuclease family.

The protein localises to the cytoplasm. In terms of biological role, 3'-to-5' exoribonuclease specific for small oligoribonucleotides. The polypeptide is Oligoribonuclease (Pectobacterium atrosepticum (strain SCRI 1043 / ATCC BAA-672) (Erwinia carotovora subsp. atroseptica)).